A 238-amino-acid chain; its full sequence is Pyridoxine 5'-phosphate synthase (238 aa).

Position 7 (Asn7) interacts with 3-amino-2-oxopropyl phosphate. Residue 9-10 (DH) coordinates 1-deoxy-D-xylulose 5-phosphate. Arg18 contributes to the 3-amino-2-oxopropyl phosphate binding site. His43 (proton acceptor) is an active-site residue. 1-deoxy-D-xylulose 5-phosphate-binding residues include Arg45 and His50. Residue Glu70 is the Proton acceptor of the active site. Thr100 contributes to the 1-deoxy-D-xylulose 5-phosphate binding site. His191 acts as the Proton donor in catalysis. Residues Gly192 and 213-214 (GH) contribute to the 3-amino-2-oxopropyl phosphate site.

It belongs to the PNP synthase family. Homooctamer; tetramer of dimers.

Its subcellular location is the cytoplasm. It catalyses the reaction 3-amino-2-oxopropyl phosphate + 1-deoxy-D-xylulose 5-phosphate = pyridoxine 5'-phosphate + phosphate + 2 H2O + H(+). The protein operates within cofactor biosynthesis; pyridoxine 5'-phosphate biosynthesis; pyridoxine 5'-phosphate from D-erythrose 4-phosphate: step 5/5. Its function is as follows. Catalyzes the complicated ring closure reaction between the two acyclic compounds 1-deoxy-D-xylulose-5-phosphate (DXP) and 3-amino-2-oxopropyl phosphate (1-amino-acetone-3-phosphate or AAP) to form pyridoxine 5'-phosphate (PNP) and inorganic phosphate. The protein is Pyridoxine 5'-phosphate synthase of Thermosynechococcus vestitus (strain NIES-2133 / IAM M-273 / BP-1).